A 287-amino-acid polypeptide reads, in one-letter code: uncharacterized protein (287 aa).

Residues threonine 43 and tyrosine 104 each act as charge relay system in the active site. Tyrosine 130 acts as the Proton donor in catalysis. The active-site Schiff-base intermediate with substrate is the lysine 158.

Belongs to the DapA family. As to quaternary structure, homotetramer.

The protein resides in the cytoplasm. This is an uncharacterized protein from Pyrococcus horikoshii (strain ATCC 700860 / DSM 12428 / JCM 9974 / NBRC 100139 / OT-3).